The sequence spans 75 residues: Mitochondrial import receptor subunit TOM7-1 (75 aa).

Methionine 1 is subject to N-acetylmethionine. Residues 1–28 (MESTISLKVNKGKGKGSKGASSSDDKSK) form a disordered region. Over 1–46 (MESTISLKVNKGKGKGSKGASSSDDKSKFDVVKEWTNWSLKKAKVV) the chain is Cytoplasmic. The chain crosses the membrane as a helical span at residues 47 to 64 (THYGFIPLVIFVGMNSDP). Residues 65 to 75 (KPHLFQLLSPV) lie on the Mitochondrial intermembrane side of the membrane.

This sequence belongs to the Tom7 family. In terms of assembly, forms part of the preprotein translocase complex of the outer mitochondrial membrane (TOM complex) which consists of at least 6 different proteins (TOM5, TOM6, TOM7, TOM20, TOM22/TOM9 and TOM40). As to expression, expressed in roots, flowers, young cotyledons and leaves.

Its subcellular location is the mitochondrion outer membrane. Its function is as follows. Seems to act as a modulator of the dynamics of the mitochondrial protein transport machinery. Seems to promote the dissociation of subunits of the outer membrane translocase. The chain is Mitochondrial import receptor subunit TOM7-1 (TOM7-1) from Arabidopsis thaliana (Mouse-ear cress).